A 224-amino-acid chain; its full sequence is Putative O-methyltransferase MLBr01075 (224 aa).

Residues Val-51, Glu-73, 75 to 76, Ser-81, Asp-99, and Ile-100 contribute to the S-adenosyl-L-methionine site; that span reads GT. Asp-147 provides a ligand contact to substrate. S-adenosyl-L-methionine is bound at residue Asp-149.

Belongs to the class I-like SAM-binding methyltransferase superfamily. Cation-dependent O-methyltransferase family.

This chain is Putative O-methyltransferase MLBr01075, found in Mycobacterium leprae (strain Br4923).